Here is a 209-residue protein sequence, read N- to C-terminus: Hyperpolarization-activated voltage-gated potassium channel (209 aa).

Topologically, residues 1 to 10 (MNLKDRRLKK) are cytoplasmic. A helical membrane pass occupies residues 11–31 (IMEVLSLIFTFEIVASFILST). Topologically, residues 32-38 (YNPPYQD) are extracellular. A helical transmembrane segment spans residues 39–59 (LLIKLDYISIMFFTFEFIYNF). Over 60 to 71 (YYVEDKAKFFKD) the chain is Cytoplasmic. Residues 72-92 (IYNIVDAIVVIAFLLYSLQVF) form a helical membrane-spanning segment. Topologically, residues 93–96 (YSKA) are extracellular. A helical; Voltage-sensor membrane pass occupies residues 97–117 (FLGLRVINLLRILVLLRIIKL). Residues 118-125 (RKLEENQA) are Cytoplasmic-facing. A helical transmembrane segment spans residues 126 to 146 (LINFLTLLTICFIASCLIWIV). Residues 147–181 (ESGVNPAINNFFDAFYFTTISITTVGYGDITPKTD) are Extracellular-facing. Positions 170–175 (TVGYGD) match the Selectivity filter motif. A helical transmembrane segment spans residues 182–202 (AGKLIIIFSVLFFISGLITSL). At 203–209 (QKALKGD) the chain is on the cytoplasmic side.

Belongs to the potassium channel family. As to quaternary structure, homotetramer.

Its subcellular location is the cell membrane. In terms of biological role, voltage-gated potassium-selective channel opened by hyperpolarization. The polypeptide is Hyperpolarization-activated voltage-gated potassium channel (mvp) (Methanocaldococcus jannaschii (strain ATCC 43067 / DSM 2661 / JAL-1 / JCM 10045 / NBRC 100440) (Methanococcus jannaschii)).